The following is a 119-amino-acid chain: Large ribosomal subunit protein uL18 (119 aa).

It belongs to the universal ribosomal protein uL18 family. As to quaternary structure, part of the 50S ribosomal subunit; part of the 5S rRNA/L5/L18/L25 subcomplex. Contacts the 5S and 23S rRNAs.

Functionally, this is one of the proteins that bind and probably mediate the attachment of the 5S RNA into the large ribosomal subunit, where it forms part of the central protuberance. The chain is Large ribosomal subunit protein uL18 from Helicobacter pylori (strain HPAG1).